The primary structure comprises 291 residues: Regulator of rDNA transcription protein 5 (291 aa).

An RRM 1 domain is found at K21–P104. A disordered region spans residues A109–K151. The 84-residue stretch at D152 to L235 folds into the RRM 2 domain. Positions H271–A291 are disordered.

It belongs to the RRT5 family.

Its function is as follows. May be involved in the modulation of rDNA transcription. The protein is Regulator of rDNA transcription protein 5 (RRT5) of Lachancea thermotolerans (strain ATCC 56472 / CBS 6340 / NRRL Y-8284) (Yeast).